The chain runs to 690 residues: MPRQHAIEDYRNFGIMAHIDAGKTTTTERILYYTGKSHKIGETHEGAATMDWMAQEQERGITITSAATTAFWNGKRLNIIDTPGHVDFTIEVERSLRVLDGAVCVLDSNQGVEPQTETVWRQGDKYKVPRIVFCNKMDKTGADFYKCLADIVDRLGARPVAVQLPIGAESAFKGMVDLVRMKALVWNIDSAGAMYDIEEIPADLADKAREYREKLVEAAVELDDNAMAAYLDGTEPDEATLKNLIRKGVITGAFYPVLCGTAFKNKGVQPLLDAVVDFLPSPLDVPAIKGTDDKGNEILRHADDKEPMSLLAFKIMDDPFVGTITFCRIYSGILQSGTGVVNSTREKKERIGRMLLMHANNREDIKEAYAGDIVALAGLKEARTGDTLCDPAHPVILEKMEFPDPVIEIAIEPKSKADQEKLGVALAKLAAEDPSFRVSTDQESGQTILKGMGELHLDIKVDILRRTYKVDANIGAPQVAFRERVTKRVEHSYTHKKQTGGTGQFAAVTLIVEPSEPGKGYEFESKIVGGAVPKEYIPGVEKGIESVLGSGVVAGFPVVDVKVQLIDGKFHDVDSSALAFEIATRACFREALQKGKSVLLEPIMKVEVVTPEDYTGSVIGDLNSRRGQIQGQDMRGNANVINAMVPLMNMFGYVNNLRSMSQGRATFTMQFDHYAEAPANVSAEVQKKFA.

Residues 8 to 283 (EDYRNFGIMA…AVVDFLPSPL (276 aa)) enclose the tr-type G domain. GTP is bound by residues 17-24 (AHIDAGKT), 81-85 (DTPGH), and 135-138 (NKMD).

Belongs to the TRAFAC class translation factor GTPase superfamily. Classic translation factor GTPase family. EF-G/EF-2 subfamily.

The protein resides in the cytoplasm. Its function is as follows. Catalyzes the GTP-dependent ribosomal translocation step during translation elongation. During this step, the ribosome changes from the pre-translocational (PRE) to the post-translocational (POST) state as the newly formed A-site-bound peptidyl-tRNA and P-site-bound deacylated tRNA move to the P and E sites, respectively. Catalyzes the coordinated movement of the two tRNA molecules, the mRNA and conformational changes in the ribosome. In Nitrobacter hamburgensis (strain DSM 10229 / NCIMB 13809 / X14), this protein is Elongation factor G.